We begin with the raw amino-acid sequence, 256 residues long: 6-phosphogluconolactonase (256 aa).

This sequence belongs to the glucosamine/galactosamine-6-phosphate isomerase family. 6-phosphogluconolactonase subfamily.

The enzyme catalyses 6-phospho-D-glucono-1,5-lactone + H2O = 6-phospho-D-gluconate + H(+). It participates in carbohydrate degradation; pentose phosphate pathway; D-ribulose 5-phosphate from D-glucose 6-phosphate (oxidative stage): step 2/3. Functionally, hydrolysis of 6-phosphogluconolactone to 6-phosphogluconate. This Chlamydia muridarum (strain MoPn / Nigg) protein is 6-phosphogluconolactonase (pgl).